The primary structure comprises 203 residues: MPGTLYVVSAPSGAGKTSLVNALVRQDEAVSLSVSHTTRPPRPGEEDGVNYHFVDRDRFQALVAQGDFLEHAEVFGNHYGTSRSAVQALLDQGQDVILEIDWQGARQVRERMPGCLSVFILPPSREELRRRLTQRGQDEPEVIDRRMAEAVSEMSHYAEYDYLLVNDDFDRTLADLQAIFTANRHRLERQEPLLAETLRDLLG.

Positions 3 to 181 (GTLYVVSAPS…TLADLQAIFT (179 aa)) constitute a Guanylate kinase-like domain. 10-17 (APSGAGKT) is an ATP binding site.

The protein belongs to the guanylate kinase family.

Its subcellular location is the cytoplasm. It catalyses the reaction GMP + ATP = GDP + ADP. Essential for recycling GMP and indirectly, cGMP. In Alkalilimnicola ehrlichii (strain ATCC BAA-1101 / DSM 17681 / MLHE-1), this protein is Guanylate kinase.